Here is a 254-residue protein sequence, read N- to C-terminus: Ubiquinone biosynthesis O-methyltransferase (254 aa).

4 residues coordinate S-adenosyl-L-methionine: arginine 47, glycine 76, aspartate 97, and leucine 141.

Belongs to the methyltransferase superfamily. UbiG/COQ3 family.

The enzyme catalyses a 3-demethylubiquinol + S-adenosyl-L-methionine = a ubiquinol + S-adenosyl-L-homocysteine + H(+). It carries out the reaction a 3-(all-trans-polyprenyl)benzene-1,2-diol + S-adenosyl-L-methionine = a 2-methoxy-6-(all-trans-polyprenyl)phenol + S-adenosyl-L-homocysteine + H(+). The protein operates within cofactor biosynthesis; ubiquinone biosynthesis. In terms of biological role, O-methyltransferase that catalyzes the 2 O-methylation steps in the ubiquinone biosynthetic pathway. In Maricaulis maris (strain MCS10) (Caulobacter maris), this protein is Ubiquinone biosynthesis O-methyltransferase.